A 427-amino-acid polypeptide reads, in one-letter code: Actin-related protein 3 (427 aa).

The protein belongs to the actin family. ARP3 subfamily. Component of the Arp2/3 complex composed of arp2, act2, arc1/p41-ARC, arc2/p34-ARC, arc3/p21-ARC, arc4/p20-ARC and arc5/p16-ARC.

The protein resides in the cytoplasm. It is found in the cytoskeleton. It localises to the actin patch. Functionally, functions as ATP-binding component of the Arp2/3 complex which is involved in regulation of actin polymerization and together with an activating nucleation-promoting factor (NPF) mediates the formation of branched actin networks. Seems to contact the pointed end of the daughter actin filament. May be involved in cytokinesis. This Schizosaccharomyces pombe (strain 972 / ATCC 24843) (Fission yeast) protein is Actin-related protein 3 (act2).